Reading from the N-terminus, the 102-residue chain is ATP-dependent Clp protease adapter protein ClpS (102 aa).

It belongs to the ClpS family. In terms of assembly, binds to the N-terminal domain of the chaperone ClpA.

Functionally, involved in the modulation of the specificity of the ClpAP-mediated ATP-dependent protein degradation. This chain is ATP-dependent Clp protease adapter protein ClpS, found in Nitrosospira multiformis (strain ATCC 25196 / NCIMB 11849 / C 71).